The primary structure comprises 298 residues: N-acetylmuramic acid 6-phosphate etherase (298 aa).

In terms of domain architecture, SIS spans 55-218 (IHAQVSGGGR…STGLMIKSGK (164 aa)). The Proton donor role is filled by Glu-83. Glu-114 is a catalytic residue.

Belongs to the GCKR-like family. MurNAc-6-P etherase subfamily. As to quaternary structure, homodimer.

It carries out the reaction N-acetyl-D-muramate 6-phosphate + H2O = N-acetyl-D-glucosamine 6-phosphate + (R)-lactate. It participates in amino-sugar metabolism; 1,6-anhydro-N-acetylmuramate degradation. It functions in the pathway amino-sugar metabolism; N-acetylmuramate degradation. The protein operates within cell wall biogenesis; peptidoglycan recycling. Its function is as follows. Specifically catalyzes the cleavage of the D-lactyl ether substituent of MurNAc 6-phosphate, producing GlcNAc 6-phosphate and D-lactate. Together with AnmK, is also required for the utilization of anhydro-N-acetylmuramic acid (anhMurNAc) either imported from the medium or derived from its own cell wall murein, and thus plays a role in cell wall recycling. This chain is N-acetylmuramic acid 6-phosphate etherase, found in Escherichia coli O157:H7 (strain EC4115 / EHEC).